Consider the following 148-residue polypeptide: Cell division protein SepF (148 aa).

It belongs to the SepF family. In terms of assembly, homodimer. Interacts with FtsZ.

The protein localises to the cytoplasm. Its function is as follows. Cell division protein that is part of the divisome complex and is recruited early to the Z-ring. Probably stimulates Z-ring formation, perhaps through the cross-linking of FtsZ protofilaments. Its function overlaps with FtsA. The chain is Cell division protein SepF from Alkaliphilus metalliredigens (strain QYMF).